The chain runs to 432 residues: Homogentisate 1,2-dioxygenase (432 aa).

The active-site Proton acceptor is the His-287. His-330 and Glu-336 together coordinate Fe cation. Homogentisate is bound by residues Tyr-345 and His-366. His-366 is a Fe cation binding site.

The protein belongs to the homogentisate dioxygenase family. As to quaternary structure, hexamer; dimer of trimers. The cofactor is Fe cation.

The enzyme catalyses homogentisate + O2 = 4-maleylacetoacetate + H(+). Its pathway is amino-acid degradation; L-phenylalanine degradation; acetoacetate and fumarate from L-phenylalanine: step 4/6. In terms of biological role, involved in the catabolism of homogentisate (2,5-dihydroxyphenylacetate or 2,5-OH-PhAc), a central intermediate in the degradation of phenylalanine and tyrosine. Catalyzes the oxidative ring cleavage of the aromatic ring of homogentisate to yield maleylacetoacetate. This chain is Homogentisate 1,2-dioxygenase, found in Pseudomonas aeruginosa (strain ATCC 15692 / DSM 22644 / CIP 104116 / JCM 14847 / LMG 12228 / 1C / PRS 101 / PAO1).